The chain runs to 217 residues: Ribosome maturation factor RimM (217 aa).

In terms of domain architecture, PRC barrel spans 115 to 186 (EDAWYDNQLV…TVTLTPPPGL (72 aa)). Residues 181–217 (TPPPGLFEDLPDDAPAAGDESEPVSPPVTAEETPGGE) form a disordered region.

Belongs to the RimM family. As to quaternary structure, binds ribosomal protein uS19.

It localises to the cytoplasm. In terms of biological role, an accessory protein needed during the final step in the assembly of 30S ribosomal subunit, possibly for assembly of the head region. Essential for efficient processing of 16S rRNA. May be needed both before and after RbfA during the maturation of 16S rRNA. It has affinity for free ribosomal 30S subunits but not for 70S ribosomes. The protein is Ribosome maturation factor RimM of Leifsonia xyli subsp. xyli (strain CTCB07).